The primary structure comprises 830 residues: Outer dense fiber protein 2 (830 aa).

Phosphoserine occurs at positions 73 and 74. Position 92 is a phosphothreonine (T92). Position 95 is a phosphoserine; by TSSK4 (S95). 2 positions are modified to phosphoserine: S106 and S109. A Phosphothreonine modification is found at T110. A phosphoserine mark is found at S115 and S129. A Glycyl lysine isopeptide (Lys-Gly) (interchain with G-Cter in SUMO2) cross-link involves residue K138. The residue at position 139 (S139) is a Phosphoserine. Residues 144–217 adopt a coiled-coil conformation; sequence QKGERQMAKR…MSKLVEAEMD (74 aa). Position 231 is a phosphothreonine (T231). 2 coiled-coil regions span residues 245-423 and 461-798; these read DINT…AEQL and EIIV…NYVQ. 2 positions are modified to phosphoserine: S261 and S632. The tract at residues 537–701 is interaction with BBOF1; that stretch reads KNYEGMIDNY…EAIHQAQLRL (165 aa).

Belongs to the ODF2 family. Self-associates. Associates with microtubules and forms a fibrillar structure partially linked to the microtubule network. Interacts via its C-terminus with PLK1. Interacts with ODF1. Interacts with MARK4; the interaction is required for localization of ODF2 to centrioles. Interacts with TSSK4. Interacts with AKNA. Interacts with CFAP58. Interacts with BBOF1. Interacts with CCDC38. Interacts with CCDC42. Post-translationally, tyrosine phosphorylated. Phosphorylated on Ser-95 by TSSK4. Testis-specific (at protein level). Expressed in spermatids at tubular stage V of the spermatogenic cycle. Highly expressed in the cytoplasm of elongating spermatids (tubular stages X/XI). In step 14/15 spermatids of tubular stage III/IV low expression detected. No expression detected in other testicular cells as well as the early round of spermatids.

It is found in the cytoplasm. The protein resides in the cytoskeleton. Its subcellular location is the microtubule organizing center. The protein localises to the centrosome. It localises to the cell projection. It is found in the cilium. The protein resides in the centriole. Its subcellular location is the spindle pole. The protein localises to the flagellum. Its function is as follows. Seems to be a major component of sperm tail outer dense fibers (ODF). ODFs are filamentous structures located on the outside of the axoneme in the midpiece and principal piece of the mammalian sperm tail and may help to maintain the passive elastic structures and elastic recoil of the sperm tail. May have a modulating influence on sperm motility. Functions as a general scaffold protein that is specifically localized at the distal/subdistal appendages of mother centrioles. Component of the centrosome matrix required for the localization of PLK1 and NIN to the centrosomes. Required for the formation and/or maintenance of normal CETN1 assembly. This is Outer dense fiber protein 2 (Odf2) from Mus musculus (Mouse).